The chain runs to 116 residues: NADPH-dependent 7-cyano-7-deazaguanine reductase (116 aa).

Catalysis depends on Cys-31, which acts as the Thioimide intermediate. Catalysis depends on Asp-38, which acts as the Proton donor. Residues 53 to 55 (VEL) and 72 to 73 (YE) each bind substrate.

It belongs to the GTP cyclohydrolase I family. QueF type 1 subfamily.

Its subcellular location is the cytoplasm. It carries out the reaction 7-aminomethyl-7-carbaguanine + 2 NADP(+) = 7-cyano-7-deazaguanine + 2 NADPH + 3 H(+). The protein operates within tRNA modification; tRNA-queuosine biosynthesis. Its function is as follows. Catalyzes the NADPH-dependent reduction of 7-cyano-7-deazaguanine (preQ0) to 7-aminomethyl-7-deazaguanine (preQ1). The polypeptide is NADPH-dependent 7-cyano-7-deazaguanine reductase (Chlorobium chlorochromatii (strain CaD3)).